The following is a 555-amino-acid chain: Formate--tetrahydrofolate ligase (555 aa).

Position 63 to 70 (63 to 70 (TPAGEGKT)) interacts with ATP.

This sequence belongs to the formate--tetrahydrofolate ligase family.

It catalyses the reaction (6S)-5,6,7,8-tetrahydrofolate + formate + ATP = (6R)-10-formyltetrahydrofolate + ADP + phosphate. Its pathway is one-carbon metabolism; tetrahydrofolate interconversion. The protein is Formate--tetrahydrofolate ligase of Beijerinckia indica subsp. indica (strain ATCC 9039 / DSM 1715 / NCIMB 8712).